Here is a 439-residue protein sequence, read N- to C-terminus: Perilipin-3 (439 aa).

Residues 1–19 are compositionally biased toward low complexity; that stretch reads MFASETEASASSTQVTTEE. Positions 1-26 are disordered; the sequence is MFASETEASASSTQVTTEEPVQQPSV. Position 66 is an N6-acetyllysine (lysine 66). Position 92 is a phosphoserine (serine 92). Lysine 123 participates in a covalent cross-link: Glycyl lysine isopeptide (Lys-Gly) (interchain with G-Cter in SUMO1). Serine 131 is subject to Phosphoserine. Threonine 175 is subject to Phosphothreonine. Phosphoserine is present on residues serine 180 and serine 184. At threonine 221 the chain carries Phosphothreonine. A phosphoserine mark is found at serine 222 and serine 246. Coiled-coil stretches lie at residues 254–282 and 358–381; these read RAYE…QALS and AHVK…FSGM. Tyrosine 256 carries the phosphotyrosine modification.

The protein belongs to the perilipin family. Homooligomer. Interacts with M6PR (via the cytoplasmic domain). Interacts with IGF2R (via the cytoplasmic domain). Post-translationally, phosphorylation at Tyr-256 by isoform 1 of CHKA (CHKalpha2) promotes dissociation from lipid droplets: dissociation is followed by recruitment of autophagosome machinery to lipid droplets and subsequent lipid droplet lipolysis.

Its subcellular location is the lipid droplet. It localises to the endosome membrane. It is found in the cytoplasm. Structural component of lipid droplets, which is required for the formation and maintenance of lipid storage droplets. Required for the transport of mannose 6-phosphate receptors (MPR) from endosomes to the trans-Golgi network. This is Perilipin-3 (PLIN3) from Sus scrofa (Pig).